Here is a 703-residue protein sequence, read N- to C-terminus: NADH-quinone oxidoreductase chain 12 (703 aa).

The next 16 helical transmembrane spans lie at 4 to 24 (FVLF…RAIG), 30 to 50 (YLTT…FLSF), 79 to 99 (LTAI…MYSL), 116 to 136 (ARFF…VTAD), 138 to 158 (LLQM…LIGF), 179 to 199 (GDFG…SVQF), 224 to 244 (ANLL…QLLL), 256 to 276 (TPVS…FLVC), 290 to 310 (NFIV…GLVQ), 325 to 345 (LGYM…FHLL), 346 to 366 (THAF…HAMH), 381 to 401 (IPLT…VGIP), 415 to 435 (AIIE…VIAA), 475 to 495 (LGVL…PFFG), 580 to 600 (VSPF…YIAN), and 679 to 699 (LFHY…WVMM).

The protein belongs to the complex I subunit 5 family. NDH-1 is composed of at least 14 different subunits, Nqo1 to Nqo14. The complex has a L-shaped structure, with the hydrophobic arm (subunits Nqo7, Nqo8, Nqo10 to Nqo14) embedded in the inner membrane and the hydrophilic peripheral arm (subunits Nqo1 to Nqo6, Nqo9) protruding into the bacterial cytoplasm. The hydrophilic domain contains all the redox centers.

Its subcellular location is the cell inner membrane. It carries out the reaction a quinone + NADH + 5 H(+)(in) = a quinol + NAD(+) + 4 H(+)(out). Functionally, NDH-1 shuttles electrons from NADH, via FMN and iron-sulfur (Fe-S) centers, to quinones in the respiratory chain. The immediate electron acceptor for the enzyme in this species is believed to be ubiquinone. Couples the redox reaction to proton translocation (for every two electrons transferred, four hydrogen ions are translocated across the cytoplasmic membrane), and thus conserves the redox energy in a proton gradient. The polypeptide is NADH-quinone oxidoreductase chain 12 (Paracoccus denitrificans).